A 296-amino-acid chain; its full sequence is Centromere protein O (296 aa).

Residues 17–105 (VLAHLERLET…NMKAILQAYR (89 aa)) adopt a coiled-coil conformation.

The protein belongs to the CENP-O/MCM21 family. As to quaternary structure, component of the CENPA-CAD complex, composed of CENPI, CENPK, CENPL, CENPO, CENPP, CENPQ, CENPR and CENPS. The CENPA-CAD complex interacts with the CENPA-NAC complex, at least composed of CENPA, CENPC, CENPH, CENPM, CENPN, CENPT and CENPU.

The protein resides in the nucleus. The protein localises to the chromosome. It is found in the centromere. Its subcellular location is the kinetochore. Component of the CENPA-CAD (nucleosome distal) complex, a complex recruited to centromeres which is involved in assembly of kinetochore proteins, mitotic progression and chromosome segregation. May be involved in incorporation of newly synthesized CENPA into centromeres via its interaction with the CENPA-NAC complex. Modulates the kinetochore-bound levels of NDC80 complex. This is Centromere protein O (CENPO) from Bos taurus (Bovine).